Here is a 256-residue protein sequence, read N- to C-terminus: Lysosomal membrane ascorbate-dependent ferrireductase CYB561A3 (256 aa).

Over 1-3 (MAS) the chain is Cytoplasmic. Residues 4–24 (GWFYMSCMVLGSLGSMCILFT) traverse the membrane as a helical segment. The Cytochrome b561 domain maps to 12–219 (VLGSLGSMCI…FGLLVLYILL (208 aa)). Residues 25–40 (TYWMQYWRGGFAWDGT) lie on the Lumenal side of the membrane. The chain crosses the membrane as a helical span at residues 41–61 (VLMFNWHPVLMVSGMVVLYGA). Heme b is bound by residues H47 and R67. Residues 62–83 (ASLVYRLPASWVGPKLPWKVLH) are Cytoplasmic-facing. Positions 76 and 80 each coordinate L-ascorbate. H83 is a heme b binding site. A helical membrane pass occupies residues 84 to 104 (AALHLLAFTVTVVGLTAVFGF). The Lumenal segment spans residues 105–119 (HNHSKITHLYSLHSW). N-linked (GlcNAc...) asparagine glycosylation occurs at N106. Heme b contacts are provided by residues 112 to 115 (HLYS) and H117. The helical transmembrane segment at 120 to 140 (LGITTVALFACQWFLGFAVFL) threads the bilayer. The Cytoplasmic segment spans residues 141-154 (LPWASQWLRSLLKP). Position 149 (R149) interacts with L-ascorbate. A helical membrane pass occupies residues 155–175 (VHVFFGACILSLSIASVISGI). Heme b is bound by residues H156 and E177. Residues 176–202 (NEKLFFVLKNATRPYSSLPGEAVFANS) lie on the Lumenal side of the membrane. A helical membrane pass occupies residues 203–223 (TGILVVSFGLLVLYILLASSW). R224 lines the heme b pocket. At 224-256 (RRPDPGALTDRQVWLLVSHYRWDKAKKACFAPC) the chain is on the cytoplasmic side.

In terms of assembly, homodimer. The cofactor is heme b. Post-translationally, N-glycosylated.

The protein localises to the late endosome membrane. It is found in the lysosome membrane. It carries out the reaction Fe(3+)(out) + L-ascorbate(in) = monodehydro-L-ascorbate radical(in) + Fe(2+)(out) + H(+). Transmembrane reductase that uses ascorbate as an electron donor in the cytoplasm and transfers electrons across membranes to reduce iron cations Fe(3+) into Fe(2+) in the lumen of the late endosome and lysosome. Reduced iron can then be extruded from the late endosome and lysosome to the cytoplasm by divalent metal-specific transporters. It is therefore most probably involved in endosomal and lysosomal cellular iron homeostasis. This is Lysosomal membrane ascorbate-dependent ferrireductase CYB561A3 from Rattus norvegicus (Rat).